Here is a 204-residue protein sequence, read N- to C-terminus: Ribosomal RNA small subunit methyltransferase G (204 aa).

Residues Gly-73, Phe-78, and Arg-139 each coordinate S-adenosyl-L-methionine.

Belongs to the methyltransferase superfamily. RNA methyltransferase RsmG family.

Its subcellular location is the cytoplasm. The enzyme catalyses guanosine(527) in 16S rRNA + S-adenosyl-L-methionine = N(7)-methylguanosine(527) in 16S rRNA + S-adenosyl-L-homocysteine. Functionally, specifically methylates the N7 position of guanine in position 527 of 16S rRNA. This is Ribosomal RNA small subunit methyltransferase G from Coxiella burnetii (strain RSA 331 / Henzerling II).